Here is a 388-residue protein sequence, read N- to C-terminus: Zinc finger protein ubi-d4 A (388 aa).

Residues 60–190 are disordered; the sequence is GPGSAPGQLY…AKGKGIGSAR (131 aa). Composition is skewed to basic and acidic residues over residues 97 to 107 and 123 to 137; these read PDPEQMLKKEG and DPIE…RDDD. The segment covering 156–170 has biased composition (acidic residues); it reads PDDFLDDLDDEDYEE. The C2H2-type zinc-finger motif lies at 205–228; it reads YACDICGKRYKNRPGLSYHYAHSH. The tract at residues 233 to 264 is disordered; that stretch reads EGAGAEDKEDSQPPTPIMHRPEEQKSKKGPDG. A compositionally biased stretch (basic and acidic residues) spans 251-262; that stretch reads HRPEEQKSKKGP. 2 PHD-type zinc fingers span residues 269-329 and 326-376; these read NNYC…CKCC and CKCC…CLDL.

This sequence belongs to the requiem/DPF family.

It localises to the cytoplasm. The protein localises to the nucleus. Its function is as follows. May be a transcription factor required for the apoptosis response following survival factor withdrawal from myeloid cells. Might also have a role in the development and maturation of lymphoid cells. The protein is Zinc finger protein ubi-d4 A (req-a) of Xenopus laevis (African clawed frog).